Reading from the N-terminus, the 244-residue chain is NH(3)-dependent NAD(+) synthetase (244 aa).

Residue 29 to 36 coordinates ATP; that stretch reads GISGGIDS. Mg(2+) is bound at residue Asp-35. Position 113 (Arg-113) interacts with deamido-NAD(+). An ATP-binding site is contributed by Thr-133. Glu-138 is a binding site for Mg(2+). Lys-146 and Asp-153 together coordinate deamido-NAD(+). 2 residues coordinate ATP: Lys-162 and Thr-184. 230–231 is a deamido-NAD(+) binding site; it reads HK.

This sequence belongs to the NAD synthetase family. Homodimer.

The enzyme catalyses deamido-NAD(+) + NH4(+) + ATP = AMP + diphosphate + NAD(+) + H(+). Its pathway is cofactor biosynthesis; NAD(+) biosynthesis; NAD(+) from deamido-NAD(+) (ammonia route): step 1/1. Catalyzes the ATP-dependent amidation of deamido-NAD to form NAD. Uses ammonia as a nitrogen source. The protein is NH(3)-dependent NAD(+) synthetase of Mesoplasma florum (strain ATCC 33453 / NBRC 100688 / NCTC 11704 / L1) (Acholeplasma florum).